Reading from the N-terminus, the 291-residue chain is ATP synthase gamma chain (291 aa).

This sequence belongs to the ATPase gamma chain family. As to quaternary structure, F-type ATPases have 2 components, CF(1) - the catalytic core - and CF(0) - the membrane proton channel. CF(1) has five subunits: alpha(3), beta(3), gamma(1), delta(1), epsilon(1). CF(0) has three main subunits: a, b and c.

The protein resides in the cell inner membrane. In terms of biological role, produces ATP from ADP in the presence of a proton gradient across the membrane. The gamma chain is believed to be important in regulating ATPase activity and the flow of protons through the CF(0) complex. The sequence is that of ATP synthase gamma chain from Sphingopyxis alaskensis (strain DSM 13593 / LMG 18877 / RB2256) (Sphingomonas alaskensis).